The chain runs to 167 residues: 2-amino-4-hydroxy-6-hydroxymethyldihydropteridine pyrophosphokinase (167 aa).

The protein belongs to the HPPK family.

The enzyme catalyses 6-hydroxymethyl-7,8-dihydropterin + ATP = (7,8-dihydropterin-6-yl)methyl diphosphate + AMP + H(+). The protein operates within cofactor biosynthesis; tetrahydrofolate biosynthesis; 2-amino-4-hydroxy-6-hydroxymethyl-7,8-dihydropteridine diphosphate from 7,8-dihydroneopterin triphosphate: step 4/4. In terms of biological role, catalyzes the transfer of pyrophosphate from adenosine triphosphate (ATP) to 6-hydroxymethyl-7,8-dihydropterin, an enzymatic step in folate biosynthesis pathway. This Bacillus subtilis (strain 168) protein is 2-amino-4-hydroxy-6-hydroxymethyldihydropteridine pyrophosphokinase (folK).